The primary structure comprises 165 residues: Adenosine 5'-monophosphoramidase HINT3 (165 aa).

Residues 1–23 form a disordered region; it reads MAEKQAGLVGEPDPEGSSPGTSE. An N-acetylalanine modification is found at Ala-2. Positions 32–143 constitute an HIT domain; sequence VFCRVAAGQE…PVKEFGFLSK (112 aa). Residues 59–60 and 128–130 contribute to the AMP site; these read DI and HLH. Residues 126-130 carry the Histidine triad motif motif; sequence HLHLH. The Tele-AMP-histidine intermediate role is filled by His-128.

It belongs to the HINT family. Forms dimers to octamers and even larger oligomer. Interacts with CALM1.

The protein localises to the cytoplasm. Its subcellular location is the nucleus. The catalysed reaction is adenosine 5'-phosphoramidate + H2O = AMP + NH4(+). Functionally, exhibits adenosine 5'-monophosphoramidase activity, hydrolyzing purine nucleotide phosphoramidates with a single phosphate group such as adenosine 5'monophosphoramidate (AMP-NH2) to yield AMP and NH2. Hydrolyzes lysyl-AMP (AMP-N-epsilon-(N-alpha-acetyl lysine methyl ester)) generated by lysine tRNA ligase. This Mus musculus (Mouse) protein is Adenosine 5'-monophosphoramidase HINT3 (Hint3).